A 339-amino-acid polypeptide reads, in one-letter code: Dihydroorotase (339 aa).

Residues His-12 and His-14 each coordinate Zn(2+). Substrate is bound by residues 14 to 16 (HVR) and Asn-40. Zn(2+) is bound by residues Lys-94, His-133, His-167, and Asp-239. Lys-94 carries the N6-carboxylysine modification. His-133 is a substrate binding site. Asp-239 is a catalytic residue. Substrate contacts are provided by His-243 and Ala-255.

This sequence belongs to the metallo-dependent hydrolases superfamily. DHOase family. Class II DHOase subfamily. As to quaternary structure, homodimer. Requires Zn(2+) as cofactor.

It carries out the reaction (S)-dihydroorotate + H2O = N-carbamoyl-L-aspartate + H(+). The protein operates within pyrimidine metabolism; UMP biosynthesis via de novo pathway; (S)-dihydroorotate from bicarbonate: step 3/3. In terms of biological role, catalyzes the reversible cyclization of carbamoyl aspartate to dihydroorotate. The sequence is that of Dihydroorotase from Helicobacter acinonychis (strain Sheeba).